The following is a 773-amino-acid chain: 5-methyltetrahydropteroyltriglutamate--homocysteine methyltransferase (773 aa).

5-methyltetrahydropteroyltri-L-glutamate contacts are provided by residues Arg16 to Lys19 and Lys116. Residues Ile437 to Ser439 and Glu490 contribute to the L-homocysteine site. Residues Ile437 to Ser439 and Glu490 each bind L-methionine. 5-methyltetrahydropteroyltri-L-glutamate is bound by residues Arg521 to Cys522 and Trp567. Asp605 is a binding site for L-homocysteine. Asp605 is an L-methionine binding site. Glu611 is a binding site for 5-methyltetrahydropteroyltri-L-glutamate. His647, Cys649, and Glu671 together coordinate Zn(2+). His700 (proton donor) is an active-site residue. Cys732 is a Zn(2+) binding site.

This sequence belongs to the vitamin-B12 independent methionine synthase family. Zn(2+) serves as cofactor.

The enzyme catalyses 5-methyltetrahydropteroyltri-L-glutamate + L-homocysteine = tetrahydropteroyltri-L-glutamate + L-methionine. It participates in amino-acid biosynthesis; L-methionine biosynthesis via de novo pathway; L-methionine from L-homocysteine (MetE route): step 1/1. In terms of biological role, catalyzes the transfer of a methyl group from 5-methyltetrahydrofolate to homocysteine resulting in methionine formation. The polypeptide is 5-methyltetrahydropteroyltriglutamate--homocysteine methyltransferase (Alkalilimnicola ehrlichii (strain ATCC BAA-1101 / DSM 17681 / MLHE-1)).